A 587-amino-acid chain; its full sequence is ATF/CREB activator 2 (587 aa).

Disordered stretches follow at residues 1–62 (MFTG…SRSL), 123–144 (LRQQ…EEES), 169–195 (NLSQ…SNIA), and 381–423 (TGGE…IPGT). A compositionally biased stretch (basic and acidic residues) spans 16 to 29 (KQKDNNKRGIDDTS). Low complexity-rich tracts occupy residues 39 to 57 (SVSD…NNSA) and 123 to 134 (LRQQQQQDQRQQ). A phosphoserine mark is found at S171 and S179. Basic and acidic residues predominate over residues 385 to 395 (NRGKSALRESH). Residues 396–418 (SNPSFTPKSQGSHLNLAANTQGN) are compositionally biased toward polar residues. Residue S399 is modified to Phosphoserine. In terms of domain architecture, bZIP spans 425 to 488 (AWKRARLLER…SKFKKFSKIH (64 aa)). Residues 427–447 (KRARLLERNRIAASKCRQRKK) form a basic motif region. Positions 453–467 (LQKEFNEIKDENRIL) are leucine-zipper. A disordered region spans residues 552 to 587 (SQRFGSDTDDDDIDLKPVEGGKDPDNQSLPNSEKIK). A Phosphoserine modification is found at S557. At T559 the chain carries Phosphothreonine. Over residues 565–576 (DLKPVEGGKDPD) the composition is skewed to basic and acidic residues. Polar residues predominate over residues 577–587 (NQSLPNSEKIK).

This sequence belongs to the bZIP family.

Its subcellular location is the nucleus. Its function is as follows. Transcriptional activator of promoters containing ATF/CREB sites. Can independently stimulate transcription through ATF/CREB sites. Important for a variety of biological functions including growth on non-optimal carbon sources. In Saccharomyces cerevisiae (strain ATCC 204508 / S288c) (Baker's yeast), this protein is ATF/CREB activator 2 (CST6).